A 232-amino-acid polypeptide reads, in one-letter code: uncharacterized protein (232 aa).

Transmembrane regions (helical) follow at residues 17–37 (FLAK…VFAY), 54–74 (MSFM…SGAL), 84–104 (ALFL…FMIY), 107–127 (GSIV…SVYG), 138–158 (GSYL…NMFF), 161–181 (SGLN…LTAY), and 203–223 (MAVV…LYLL).

It belongs to the BI1 family.

The protein resides in the cell membrane. This is an uncharacterized protein from Borreliella burgdorferi (strain ATCC 35210 / DSM 4680 / CIP 102532 / B31) (Borrelia burgdorferi).